Consider the following 150-residue polypeptide: Transcriptional repressor NrdR (150 aa).

A zinc finger lies at 3–34 (CPYCQFEDTRVIDSRLASEGEQVRRRRECNRC). The ATP-cone domain occupies 49 to 139 (PRIVKRDGTR…VYRSFEDVSA (91 aa)).

The protein belongs to the NrdR family. Requires Zn(2+) as cofactor.

In terms of biological role, negatively regulates transcription of bacterial ribonucleotide reductase nrd genes and operons by binding to NrdR-boxes. In Alkalilimnicola ehrlichii (strain ATCC BAA-1101 / DSM 17681 / MLHE-1), this protein is Transcriptional repressor NrdR.